Reading from the N-terminus, the 370-residue chain is Coiled-coil domain-containing protein 89 (370 aa).

The disordered stretch occupies residues M1–K21. At T12 the chain carries Phosphothreonine. Residues K36–A346 adopt a coiled-coil conformation.

This sequence belongs to the CCDC89 family. Interacts with HEY1. As to expression, expression is restricted to the adult testis, where localization is almost exclusive to round spermatids.

It is found in the cytoplasm. Its subcellular location is the nucleus. This is Coiled-coil domain-containing protein 89 from Mus musculus (Mouse).